Reading from the N-terminus, the 241-residue chain is tRNA pseudouridine synthase A (241 aa).

Asp-51 functions as the Nucleophile in the catalytic mechanism. Position 110 (Tyr-110) interacts with substrate.

The protein belongs to the tRNA pseudouridine synthase TruA family. Homodimer.

It carries out the reaction uridine(38/39/40) in tRNA = pseudouridine(38/39/40) in tRNA. In terms of biological role, formation of pseudouridine at positions 38, 39 and 40 in the anticodon stem and loop of transfer RNAs. This is tRNA pseudouridine synthase A from Campylobacter jejuni subsp. doylei (strain ATCC BAA-1458 / RM4099 / 269.97).